Here is a 749-residue protein sequence, read N- to C-terminus: Amyloid-beta A4 precursor protein-binding family A member 2 (749 aa).

Disordered regions lie at residues 1–94 (MAHR…PEEE), 130–220 (DTDE…GDLE), and 238–344 (SMTS…NIPE). Phosphoserine is present on S11. The segment covering 70-80 (GDSSSDYVNNT) has biased composition (polar residues). Acidic residues-rich tracts occupy residues 81–94 (SEEEDYDEGLPEEE) and 131–142 (TDECQEAVEEWT). Residues 185–270 (HYCASKEGYQ…SVEACPPIKA (86 aa)) are STXBP1-binding. Position 208 is a phosphoserine (S208). Positions 238-247 (SMTSITSASE) are enriched in polar residues. The segment covering 305-315 (RTPEERLKWPH) has biased composition (basic and acidic residues). One can recognise a PID domain in the interval 368-555 (DGIIFAANYL…IINTQEMYND (188 aa)). PDZ domains are found at residues 568–654 (ELQL…IVSC) and 659–734 (TVLI…TMPA).

As to quaternary structure, part of a multimeric complex containing STXBP1 and syntaxin-1. Binds to the cytoplasmic domain of amyloid-beta protein, and to the nuclear factor NF-kappa-B/p65 via its PDZ domain. Interacts with the N-terminal domain of NECAB3. In terms of tissue distribution, brain.

Its function is as follows. Putative function in synaptic vesicle exocytosis by binding to STXBP1, an essential component of the synaptic vesicle exocytotic machinery. May modulate processing of the amyloid-beta precursor protein (APP) and hence formation of APP-beta. In Homo sapiens (Human), this protein is Amyloid-beta A4 precursor protein-binding family A member 2 (APBA2).